A 424-amino-acid chain; its full sequence is Inhibin beta A chain (424 aa).

The N-terminal stretch at 1–20 is a signal peptide; the sequence is MPLLWKRGFLLVICWIIVRS. Residues 21-308 constitute a propeptide that is removed on maturation; it reads SPTPGSEGHS…EDRQHRRRER (288 aa). Residue N165 is glycosylated (N-linked (GlcNAc...) asparagine). 2 disordered regions span residues 178-200 and 260-288; these read QQRQ…LKGE and KKKK…QSHR. Residues 263–275 show a composition bias toward basic and acidic residues; sequence KEDDGEGKEKDGG. 4 disulfides stabilise this stretch: C312/C320, C319/C389, C348/C421, and C352/C423.

This sequence belongs to the TGF-beta family. As to quaternary structure, dimeric, linked by one or more disulfide bonds. Inhibin A is a dimer of alpha and beta-A. Inhibin B is a dimer of alpha and beta-B. Activin A is a homodimer of beta-A. Activin B is a homodimer of beta-B. Activin AB is a dimer of beta-A and beta-B. In terms of tissue distribution, ciliary ganglion neurons. Levels are higher in the choroid than the iris.

The protein resides in the secreted. Functionally, inhibins and activins inhibit and activate, respectively, the secretion of follitropin by the pituitary gland. Inhibins/activins are involved in regulating a number of diverse functions such as hypothalamic and pituitary hormone secretion, gonadal hormone secretion, germ cell development and maturation, erythroid differentiation, insulin secretion, nerve cell survival, embryonic axial development or bone growth, depending on their subunit composition. Inhibins appear to oppose the functions of activins. Induces somatostatin in the ciliary ganglion neurons and may play a role in regulating neurotransmitter phenotype. This chain is Inhibin beta A chain (INHBA), found in Gallus gallus (Chicken).